The following is a 1220-amino-acid chain: Polycomb protein Sfmbt (1220 aa).

The segment at 322 to 357 adopts an FCS-type zinc-finger fold; it reads PIQKDGMAVCKRCGAIGVKHTFYTKSRRFCSMACAR. Residues C331, C334, C351, and C355 each coordinate Zn(2+). Disordered regions lie at residues 371–399 and 464–483; these read GDQATTSSPDPGAGSESADLPGDQQQSQS and DATAPGSTEEGASTPNSYLS. Residues 473-482 are compositionally biased toward polar residues; that stretch reads EGASTPNSYL. 4 MBT repeats span residues 536–647, 655–753, 761–871, and 879–975; these read YDWL…LIPP, KDWK…LAAP, LAGR…VTPP, and FTWE…LEGP. Disordered regions lie at residues 976–1024 and 1050–1092; these read PRVA…IALK and NNQP…AGSG. Residues 991 to 1000 show a composition bias toward basic residues; the sequence is KIQRKRKPKK. The span at 1052–1068 shows a compositional bias: acidic residues; sequence QPEEEGDEEDPDADGDG. A compositionally biased stretch (polar residues) spans 1071–1082; it reads STSHISEQSTTQ. Residues 1083–1092 are compositionally biased toward low complexity; it reads SSSDLIAGSG. Residues 1140-1203 enclose the SAM domain; it reads WNVYDVSQFL…SDLIAQLKCK (64 aa).

As to quaternary structure, interacts with pho as a component of the pho-repressive complex (PhoRC).

It is found in the nucleus. Polycomb group (PcG) protein that binds to the Polycomb response elements (PREs) found in the regulatory regions of many genes. PcG proteins act by forming multiprotein complexes, which are required to maintain the transcriptionally repressive state of homeotic genes throughout development. PcG proteins are not required to initiate repression, but to maintain it during later stages of development. They probably act via the methylation of histones, rendering chromatin heritably changed in its expressibility. Necessary but not sufficient to recruit a functional PcG repressive complex that represses target genes, suggesting that the recruitment of the distinct PRC1 complex is also required to allow a subsequent repression. The protein is Polycomb protein Sfmbt of Drosophila melanogaster (Fruit fly).